The sequence spans 606 residues: Nuclear hormone receptor E75 (606 aa).

The segment at residues 29 to 105 (TVLCRVCGDK…VGMSRDAVRF (77 aa)) is a DNA-binding region (nuclear receptor). NR C4-type zinc fingers lie at residues 32–52 (CRVC…CEGC) and 69–93 (CTKN…LKKC). The region spanning 138–392 (DDTRVTAAII…APWDDSRSSW (255 aa)) is the NR LBD domain. 3 disordered regions span residues 382–413 (GAPW…DEAM), 454–519 (RRRH…EKER), and 546–576 (RKPT…PRSW). Composition is skewed to low complexity over residues 390-406 (SSWS…PSSS) and 501-512 (LSSPSVCSSPRS). Residues 546–558 (RKPTTSPIKSSVR) are compositionally biased toward polar residues.

This sequence belongs to the nuclear hormone receptor family. NR1 subfamily. In terms of tissue distribution, expressed in the epidermis, eyestalk and the nerve cord of the pre-molt shrimp.

Its subcellular location is the nucleus. The chain is Nuclear hormone receptor E75 (E75) from Metapenaeus ensis (Greasyback shrimp).